We begin with the raw amino-acid sequence, 257 residues long: Zinc transporter ZupT (257 aa).

Transmembrane regions (helical) follow at residues leucine 5 to glycine 25, leucine 32 to methionine 52, glycine 61 to leucine 81, alanine 109 to valine 129, leucine 137 to valine 157, isoleucine 171 to isoleucine 191, methionine 195 to leucine 215, and glycine 236 to isoleucine 256. Fe(2+) is bound by residues asparagine 120 and glutamate 123. Positions 123 and 148 each coordinate Zn(2+). Residues asparagine 149, glutamate 152, and glutamate 181 each coordinate Fe(2+). Glutamate 152 provides a ligand contact to Zn(2+).

Belongs to the ZIP transporter (TC 2.A.5) family. ZupT subfamily.

Its subcellular location is the cell inner membrane. It catalyses the reaction Zn(2+)(in) = Zn(2+)(out). In terms of biological role, mediates zinc uptake. May also transport other divalent cations. This chain is Zinc transporter ZupT, found in Shigella dysenteriae serotype 1 (strain Sd197).